The chain runs to 475 residues: Doublecortin domain-containing protein 2 (475 aa).

2 consecutive Doublecortin domains span residues Lys-17–Leu-100 and Cys-139–Ser-221. A disordered region spans residues Tyr-234 to Ala-475. A compositionally biased stretch (polar residues) spans Gly-252 to Gln-272. Position 270 is a phosphoserine (Ser-270). Residues Glu-353–Phe-365 are compositionally biased toward basic and acidic residues. Residues Thr-407 to Thr-425 show a composition bias toward acidic residues.

In terms of assembly, interacts with DVL1, DVL2 and DVL3. Expressed in hair cells of the inner ear.

The protein localises to the cell projection. It localises to the cilium. It is found in the cytoplasm. Its subcellular location is the cytoskeleton. The protein resides in the cilium axoneme. The protein localises to the kinocilium. In terms of biological role, protein that plays a role in the inhibition of canonical Wnt signaling pathway. May be involved in neuronal migration during development of the cerebral neocortex. Involved in the control of ciliogenesis and ciliary length. This chain is Doublecortin domain-containing protein 2 (Dcdc2), found in Mus musculus (Mouse).